The sequence spans 662 residues: MSNRRETRAQAQQFIDNLKPLQHPNSEKIYLQGSRADLKVGMRQIHQADTLIGGNETNPVFEANPPLKVYDCAGAYSDPDANIDVRKGLEKFREHWIEERGDTEQLAGVSSGFTQQRLADDGLDHLRFESLLPPRRAKTAKRVTQLHYARQGIITPEMEYIAIRENMALAEVNDPILTQKDKGESFGAVIGEPITPEFVRQEVARGRAIIPLNINHPEAEPMIIGRNFLVKVNANIGNSAVTSSIEEEVEKLVWSTRWGADTVMDLSTGRYIHETREWIIRNSPVPIGTVPIYQALEKVNGIAEDLNWETFRDTLIEQAEQGVDYFTIHAGVLLRYVPMTAKRLTGIVSRGGSIMAKWCLSHHKENFLYEHFRDICEICAAYDVSLSLGDGMRPGSIADANDEAQFSELTTLGELVKIAWQYDVQTIIEGPGHIPMNLIKENMDKQLELCDEAPFYTLGPQTTDIAPGYDHFTSGIGAAMIAWYGCAMLCYVTPKEHLGLPNKEDVKQGLITYKIAAHAGDVAKGHPSAQIRDNALSKARFEFRWEDQYNLGLDPDTARAYHDESLPQESAKVAHFCSMCGPKFCSMKITQEVRDYAAAKERDELANNIDIKSDAEYQSCADSETTSERELGMAQMSAEFKAKGAELYHEAADKQRDAVLED.

Residues Asn235, Met264, Tyr293, His329, 349 to 351 (SRG), 390 to 393 (DGMR), and Glu429 each bind substrate. His433 contacts Zn(2+). Tyr456 contacts substrate. His497 contacts Zn(2+). Positions 577, 580, and 585 each coordinate [4Fe-4S] cluster.

Belongs to the ThiC family. Homodimer. The cofactor is [4Fe-4S] cluster.

The catalysed reaction is 5-amino-1-(5-phospho-beta-D-ribosyl)imidazole + S-adenosyl-L-methionine = 4-amino-2-methyl-5-(phosphooxymethyl)pyrimidine + CO + 5'-deoxyadenosine + formate + L-methionine + 3 H(+). Its pathway is cofactor biosynthesis; thiamine diphosphate biosynthesis. In terms of biological role, catalyzes the synthesis of the hydroxymethylpyrimidine phosphate (HMP-P) moiety of thiamine from aminoimidazole ribotide (AIR) in a radical S-adenosyl-L-methionine (SAM)-dependent reaction. In Shewanella halifaxensis (strain HAW-EB4), this protein is Phosphomethylpyrimidine synthase.